A 323-amino-acid polypeptide reads, in one-letter code: UDP-N-acetylenolpyruvoylglucosamine reductase (323 aa).

The FAD-binding PCMH-type domain maps to 52 to 217 (KSGGAADWLF…VSARLQGEPG (166 aa)). Residue R197 is part of the active site. The segment at 234 to 253 (EQSQPVRTKTGGSTFKNPPG) is disordered. A compositionally biased stretch (polar residues) spans 235 to 249 (QSQPVRTKTGGSTFK). The Proton donor role is filled by S246. E316 is a catalytic residue.

The protein belongs to the MurB family. The cofactor is FAD.

The protein resides in the cytoplasm. The enzyme catalyses UDP-N-acetyl-alpha-D-muramate + NADP(+) = UDP-N-acetyl-3-O-(1-carboxyvinyl)-alpha-D-glucosamine + NADPH + H(+). It participates in cell wall biogenesis; peptidoglycan biosynthesis. Its function is as follows. Cell wall formation. This Erythrobacter litoralis (strain HTCC2594) protein is UDP-N-acetylenolpyruvoylglucosamine reductase.